The chain runs to 88 residues: ATP synthase epsilon chain (88 aa).

This sequence belongs to the ATPase epsilon chain family. F-type ATPases have 2 components, CF(1) - the catalytic core - and CF(0) - the membrane proton channel. CF(1) has five subunits: alpha(3), beta(3), gamma(1), delta(1), epsilon(1). CF(0) has three main subunits: a, b and c.

The protein localises to the cell inner membrane. Functionally, produces ATP from ADP in the presence of a proton gradient across the membrane. The protein is ATP synthase epsilon chain (atpC) of Chlorobaculum tepidum (strain ATCC 49652 / DSM 12025 / NBRC 103806 / TLS) (Chlorobium tepidum).